Here is a 379-residue protein sequence, read N- to C-terminus: Eukaryotic translation initiation factor 3 subunit M (379 aa).

The 163-residue stretch at 179 to 341 folds into the PCI domain; it reads RSEEASKVMI…RKVIISSVAQ (163 aa).

This sequence belongs to the eIF-3 subunit M family. In terms of assembly, component of the eukaryotic translation initiation factor 3 (eIF-3) complex.

The protein resides in the cytoplasm. Its function is as follows. Component of the eukaryotic translation initiation factor 3 (eIF-3) complex, which is involved in protein synthesis of a specialized repertoire of mRNAs and, together with other initiation factors, stimulates binding of mRNA and methionyl-tRNAi to the 40S ribosome. The eIF-3 complex specifically targets and initiates translation of a subset of mRNAs involved in cell proliferation. The polypeptide is Eukaryotic translation initiation factor 3 subunit M (Nematostella vectensis (Starlet sea anemone)).